The sequence spans 388 residues: Succinate--CoA ligase [ADP-forming] subunit beta (388 aa).

One can recognise an ATP-grasp domain in the interval 9–244 (KQLFARYGLP…HSQEDEREAH (236 aa)). Residues Lys46, 53–55 (GRG), Glu99, Thr102, and Glu107 each bind ATP. Residues Asn199 and Asp213 each contribute to the Mg(2+) site. Residues Asn264 and 321–323 (GIV) each bind substrate.

This sequence belongs to the succinate/malate CoA ligase beta subunit family. As to quaternary structure, heterotetramer of two alpha and two beta subunits. Requires Mg(2+) as cofactor.

It carries out the reaction succinate + ATP + CoA = succinyl-CoA + ADP + phosphate. It catalyses the reaction GTP + succinate + CoA = succinyl-CoA + GDP + phosphate. The protein operates within carbohydrate metabolism; tricarboxylic acid cycle; succinate from succinyl-CoA (ligase route): step 1/1. Functionally, succinyl-CoA synthetase functions in the citric acid cycle (TCA), coupling the hydrolysis of succinyl-CoA to the synthesis of either ATP or GTP and thus represents the only step of substrate-level phosphorylation in the TCA. The beta subunit provides nucleotide specificity of the enzyme and binds the substrate succinate, while the binding sites for coenzyme A and phosphate are found in the alpha subunit. This is Succinate--CoA ligase [ADP-forming] subunit beta from Sodalis glossinidius (strain morsitans).